An 82-amino-acid polypeptide reads, in one-letter code: Hepcidin (82 aa).

The signal sequence occupies residues 1–23 (MALSVQIRAACLLLLLLVSLTAG). The propeptide occupies 24 to 53 (SVLPSQTRQLTDLRTQDTAGATAGLTPVAQ). 4 disulfides stabilise this stretch: cysteine 64/cysteine 80, cysteine 67/cysteine 70, cysteine 68/cysteine 76, and cysteine 71/cysteine 79.

The protein belongs to the hepcidin family. As to quaternary structure, interacts with SLC40A1; this interaction promotes SLC40A1 rapid ubiquitination.

The protein resides in the secreted. In terms of biological role, liver-produced hormone that constitutes the main circulating regulator of iron absorption and distribution across tissues. Acts by promoting endocytosis and degradation of ferroportin/SLC40A1, leading to the retention of iron in iron-exporting cells and decreased flow of iron into plasma. Controls the major flows of iron into plasma: absorption of dietary iron in the intestine, recycling of iron by macrophages, which phagocytose old erythrocytes and other cells, and mobilization of stored iron from hepatocytes. Functionally, has strong antimicrobial activity against E.coli ML35P N.cinerea and weaker against S.epidermidis, S.aureus and group b streptococcus bacteria. Active against the fungus C.albicans. No activity against P.aeruginosa. This Sus scrofa (Pig) protein is Hepcidin (HAMP).